The following is a 416-amino-acid chain: Subtilisin-like protease 12 (416 aa).

The signal sequence occupies residues 1–19 (MSILKMMLIYFAIFWVVNA). Residues 20-116 (AQLLDIDSQG…VEPNKEMQVA (97 aa)) constitute a propeptide that is removed on maturation. Residues 35-115 (YIVVMKDRVS…FVEPNKEMQV (81 aa)) enclose the Inhibitor I9 domain. Residues Asn-123, Asn-136, and Asn-150 are each glycosylated (N-linked (GlcNAc...) asparagine). The Peptidase S8 domain occupies 125-416 (TWGLSRISHK…NKLLYNGSGA (292 aa)). Residues Asp-157 and His-188 each act as charge relay system in the active site. 4 N-linked (GlcNAc...) asparagine glycosylation sites follow: Asn-249, Asn-305, Asn-334, and Asn-353. Ser-362 functions as the Charge relay system in the catalytic mechanism. N-linked (GlcNAc...) asparagine glycosylation is found at Asn-404 and Asn-412.

This sequence belongs to the peptidase S8 family.

The protein resides in the secreted. Secreted subtilisin-like serine protease with keratinolytic activity that contributes to pathogenicity. The polypeptide is Subtilisin-like protease 12 (SUB12) (Arthroderma benhamiae (strain ATCC MYA-4681 / CBS 112371) (Trichophyton mentagrophytes)).